Reading from the N-terminus, the 242-residue chain is MIKMTGVQKYFGDFHALTDIDLEIPRGQVVVVLGPSGSGKSTLCRTINRLETIEEGTIEIDGKVLPEEGKGLANLRADVGMVFQSFNLFPHLTIKDNVTLAPIKVRKMKKSEAEKLAMSLLERVGIANQADKYPAQLSGGQQQRVAIARALAMNPKIMLFDEPTSALDPEMVNEVLDVMASLAKEGMTMVCVTHEMGFARKAADRVLFMADGLIVEDTEPDSFFTNPKSDRAKDFLGKILAH.

Residues 2 to 236 (IKMTGVQKYF…PKSDRAKDFL (235 aa)) form the ABC transporter domain. 34 to 41 (GPSGSGKS) is a binding site for ATP.

Belongs to the ABC transporter superfamily. The complex is composed of two ATP-binding proteins (GluA), two transmembrane proteins (GluC and GluD) and a solute-binding protein (GluB).

It is found in the cell membrane. The enzyme catalyses a polar amino acid(out) + ATP + H2O = a polar amino acid(in) + ADP + phosphate + H(+). The catalysed reaction is L-glutamate(out) + ATP + H2O = L-glutamate(in) + ADP + phosphate + H(+). In terms of biological role, part of the ABC transporter complex GluABCD involved in glutamate uptake. Probably responsible for energy coupling to the transport system. The chain is Glutamate transport ATP-binding protein GluA from Corynebacterium glutamicum (strain ATCC 13032 / DSM 20300 / JCM 1318 / BCRC 11384 / CCUG 27702 / LMG 3730 / NBRC 12168 / NCIMB 10025 / NRRL B-2784 / 534).